Consider the following 206-residue polypeptide: Small ribosomal subunit protein uS4 (206 aa).

Positions 96-156 (GRLDNVVYRM…EKSKKQARIK (61 aa)) constitute an S4 RNA-binding domain.

It belongs to the universal ribosomal protein uS4 family. As to quaternary structure, part of the 30S ribosomal subunit. Contacts protein S5. The interaction surface between S4 and S5 is involved in control of translational fidelity.

Its function is as follows. One of the primary rRNA binding proteins, it binds directly to 16S rRNA where it nucleates assembly of the body of the 30S subunit. In terms of biological role, with S5 and S12 plays an important role in translational accuracy. This is Small ribosomal subunit protein uS4 from Pasteurella multocida (strain Pm70).